The sequence spans 327 residues: Lipid phosphate phosphatase 1 (327 aa).

Transmembrane regions (helical) follow at residues 51–71 (WIIL…SPFY), 93–113 (IWSV…CFYL), 118–138 (VYDL…TGVI), 187–207 (FPSG…LYLS), 217–237 (GHVA…LVGI), and 244–264 (WHHW…AAFC).

It belongs to the PA-phosphatase related phosphoesterase family. Strongly expressed in leaves, moderately in roots, weakly in floral hamps and flower buds, and not detected in adult flowers and seedpods.

The protein resides in the membrane. Its activity is regulated as follows. PA phosphatase activity inhibited by N-ethylmaleimide with an IC(50) value of 10 mM. In terms of biological role, plays a general role in cellular responses to stress, may be by attenuating the signal produced by phospholipases. Exhibits both diacylglycerol pyrophosphate (DGPP) phosphatase and phosphatidate (PA) phosphatase activities. Substrate preference is diacylglycerol pyrophosphate &gt; phosphatidate. This is Lipid phosphate phosphatase 1 (LPP1) from Arabidopsis thaliana (Mouse-ear cress).